Here is a 252-residue protein sequence, read N- to C-terminus: UPF0273 protein MK0039 (252 aa).

Positions 4 to 248 (ERVSTGIPGM…VFVKERGEVR (245 aa)) constitute a KaiC domain. An ATP-binding site is contributed by 31 to 38 (GGPGTGKT).

This sequence belongs to the UPF0273 family.

This chain is UPF0273 protein MK0039, found in Methanopyrus kandleri (strain AV19 / DSM 6324 / JCM 9639 / NBRC 100938).